The chain runs to 295 residues: Pyridoxal 5'-phosphate synthase subunit PdxS (295 aa).

D-ribose 5-phosphate is bound at residue Asp25. Lys82 functions as the Schiff-base intermediate with D-ribose 5-phosphate in the catalytic mechanism. Gly154 serves as a coordination point for D-ribose 5-phosphate. Arg166 is a binding site for D-glyceraldehyde 3-phosphate. Residues Gly215 and 236–237 (GS) contribute to the D-ribose 5-phosphate site.

Belongs to the PdxS/SNZ family. In terms of assembly, in the presence of PdxT, forms a dodecamer of heterodimers.

The catalysed reaction is aldehydo-D-ribose 5-phosphate + D-glyceraldehyde 3-phosphate + L-glutamine = pyridoxal 5'-phosphate + L-glutamate + phosphate + 3 H2O + H(+). It functions in the pathway cofactor biosynthesis; pyridoxal 5'-phosphate biosynthesis. Functionally, catalyzes the formation of pyridoxal 5'-phosphate from ribose 5-phosphate (RBP), glyceraldehyde 3-phosphate (G3P) and ammonia. The ammonia is provided by the PdxT subunit. Can also use ribulose 5-phosphate and dihydroxyacetone phosphate as substrates, resulting from enzyme-catalyzed isomerization of RBP and G3P, respectively. The chain is Pyridoxal 5'-phosphate synthase subunit PdxS from Staphylococcus haemolyticus (strain JCSC1435).